A 457-amino-acid chain; its full sequence is Putative hexose transporter 12 (457 aa).

Over Met1–Gly2 the chain is Cytoplasmic. The chain crosses the membrane as a helical span at residues Leu3–Gly23. The Extracellular portion of the chain corresponds to Asp24–Arg29. The chain crosses the membrane as a helical span at residues Ile30–Ile50. Residues Asn51–Arg60 are Cytoplasmic-facing. The helical transmembrane segment at Ile61–Val81 threads the bilayer. The Extracellular portion of the chain corresponds to Ala82–Arg87. A helical transmembrane segment spans residues Gly88–Thr108. Topologically, residues Asn109 to Arg122 are cytoplasmic. A helical transmembrane segment spans residues Val123 to Pro143. Residues Glu144–Gln247 are Extracellular-facing. A glycan (N-linked (GlcNAc...) asparagine) is linked at Asn194. The chain crosses the membrane as a helical span at residues Thr248–Glu268. The Cytoplasmic segment spans residues Arg269–Thr274. A helical transmembrane segment spans residues Cys275–Val295. The Extracellular segment spans residues Thr296 to Val319. Residues Phe320–Val340 traverse the membrane as a helical segment. The Cytoplasmic segment spans residues Ser341–Met353. Residues Ala354 to Ile374 form a helical membrane-spanning segment. The Extracellular segment spans residues Thr375–Asn379. The chain crosses the membrane as a helical span at residues Phe380–Phe400. Topologically, residues Val401–Ser457 are cytoplasmic.

It belongs to the major facilitator superfamily. Sugar transporter (TC 2.A.1.1) family.

It localises to the membrane. In terms of biological role, probable glucose transporter. The sequence is that of Putative hexose transporter 12 (HXT12) from Saccharomyces cerevisiae (strain ATCC 204508 / S288c) (Baker's yeast).